Reading from the N-terminus, the 160-residue chain is Endoribonuclease YbeY (160 aa).

The Zn(2+) site is built by His-118, His-122, and His-128.

The protein belongs to the endoribonuclease YbeY family. Requires Zn(2+) as cofactor.

The protein localises to the cytoplasm. In terms of biological role, single strand-specific metallo-endoribonuclease involved in late-stage 70S ribosome quality control and in maturation of the 3' terminus of the 16S rRNA. This Treponema pallidum (strain Nichols) protein is Endoribonuclease YbeY.